We begin with the raw amino-acid sequence, 1018 residues long: Inner centromere protein pic1 (1018 aa).

Ser171 bears the Phosphoserine mark. Disordered stretches follow at residues 184-207, 247-287, 306-365, 522-556, 570-756, 781-813, 848-867, and 877-944; these read VPLR…PKQK, RTKD…SSSP, AKES…PPEI, TRKS…LPPS, EPLH…TSKP, EPDS…EDRK, TKQN…SQSN, and HAPA…LPSW. Polar residues-rich tracts occupy residues 189-199 and 268-287; these read TSPSPSETADS and PSTT…SSSP. Low complexity predominate over residues 309–320; it reads SLTSSTRLSTSY. Composition is skewed to polar residues over residues 329–339 and 522–554; these read VAFSSETVTSS and TRKS…SSLP. Basic and acidic residues-rich tracts occupy residues 570-580 and 624-644; these read EPLHDDSRQNS and RSSE…RELS. Positions 645–664 are enriched in polar residues; it reads NNEFPSRQTKTVTSANSSNI. Basic and acidic residues-rich tracts occupy residues 665–679 and 692–702; these read RDME…RSEP and KPFEEKSEKPT. Composition is skewed to polar residues over residues 705–719 and 784–808; these read RLVT…SWHS and SVTS…TNSQ. Positions 890–902 are enriched in low complexity; that stretch reads PSSKSPLLKTPKS.

The protein belongs to the INCENP family. In terms of assembly, component of the CPC complex at least composed of ark1, bir1 and pic1.

It is found in the nucleus. It localises to the cytoplasm. The protein resides in the cytoskeleton. Its subcellular location is the spindle. Functionally, component of the chromosomal passenger complex (CPC), a complex that acts as a key regulator of mitosis. Has a role in sister chromatid cohesion and condensation. The polypeptide is Inner centromere protein pic1 (pic1) (Schizosaccharomyces pombe (strain 972 / ATCC 24843) (Fission yeast)).